The following is a 429-amino-acid chain: Adenylosuccinate synthetase (429 aa).

GTP-binding positions include 12-18 (GDEGKGK) and 40-42 (GHT). Catalysis depends on D13, which acts as the Proton acceptor. Residues D13 and G40 each contribute to the Mg(2+) site. IMP-binding positions include 13 to 16 (DEGK), 38 to 41 (NAGH), T127, R141, Q222, T237, and R301. H41 acts as the Proton donor in catalysis. Residue 297–303 (ATTGRPR) participates in substrate binding. Residues R303, 329–331 (KLD), and 411–413 (SLG) each bind GTP.

Belongs to the adenylosuccinate synthetase family. As to quaternary structure, homodimer. The cofactor is Mg(2+).

The protein localises to the cytoplasm. The catalysed reaction is IMP + L-aspartate + GTP = N(6)-(1,2-dicarboxyethyl)-AMP + GDP + phosphate + 2 H(+). Its pathway is purine metabolism; AMP biosynthesis via de novo pathway; AMP from IMP: step 1/2. Plays an important role in the de novo pathway of purine nucleotide biosynthesis. Catalyzes the first committed step in the biosynthesis of AMP from IMP. This Endomicrobium trichonymphae protein is Adenylosuccinate synthetase.